The chain runs to 1378 residues: Macrophage-stimulating protein receptor (1378 aa).

An N-terminal signal peptide occupies residues 1 to 23; that stretch reads MGLPLPLLQSSLLLMLLLRLSAA. Residues 25 to 960 are Extracellular-facing; that stretch reads TNLNWQCPRI…RSSPGRASQR (936 aa). In terms of domain architecture, Sema spans 33 to 524; sequence RIPYAASRDF…SGDQVFKVPI (492 aa). N-linked (GlcNAc...) asparagine glycosylation occurs at Asn-91. Intrachain disulfides connect Cys-102-Cys-105, Cys-108-Cys-163, Cys-136-Cys-144, Cys-175-Cys-178, Cys-301-Cys-368, Cys-386-Cys-409, and Cys-387-Cys-424. Residues Asn-391, Asn-460, and Asn-490 are each glycosylated (N-linked (GlcNAc...) asparagine). Intrachain disulfides connect Cys-529-Cys-547, Cys-535-Cys-569, Cys-538-Cys-554, and Cys-550-Cys-560. IPT/TIG domains lie at 571-673, 686-769, and 772-864; these read PEIS…FRVE, PVLT…FHYK, and PIVL…FRFL. N-linked (GlcNAc...) asparagine glycans are attached at residues Asn-656, Asn-722, Asn-845, and Asn-901. The helical transmembrane segment at 961 to 981 threads the bilayer; the sequence is ILLIALLVLILLVAVLAVALI. The Cytoplasmic portion of the chain corresponds to 982–1378; that stretch reads FNSRRRKKQL…RPLSEPPLPT (397 aa). A disordered region spans residues 1002 to 1026; it reads SDINDTASGAPNHEESSESRDGTSV. Basic and acidic residues predominate over residues 1013-1022; the sequence is NHEESSESRD. A Protein kinase domain is found at 1059–1322; it reads IHTDQVIGKG…ALVLEVKQVV (264 aa). ATP-binding positions include 1065-1073, Lys-1091, and 1138-1141; these read IGKGHFGVV and LPYM. Asp-1185 serves as the catalytic Proton acceptor. Residue Arg-1189 participates in ATP binding. Residues Tyr-1215, Tyr-1216, Tyr-1330, and Tyr-1337 each carry the phosphotyrosine; by autocatalysis modification. The disordered stretch occupies residues 1347 to 1378; sequence DGSVPPEQVQPSPQHCRSTSKPRPLSEPPLPT. The span at 1349 to 1360 shows a compositional bias: low complexity; the sequence is SVPPEQVQPSPQ.

It belongs to the protein kinase superfamily. Tyr protein kinase family. As to quaternary structure, heterodimer of an alpha chain and a beta chain which are disulfide linked. Binds PLXNB1. Associates with and is negatively regulated by HYAL2. Interacts when phosphorylated with downstream effectors including PIK3R1, PCLG1, GRB2 and GAB1. Interacts with integrin beta1/ITGB1 in a ligand-independent fashion. Isoform sf-Stk forms covalent heterodimers with friend spleen focus-forming virus (FSFFV) gp55. In terms of processing, proteolytic processing yields the two subunits. Post-translationally, autophosphorylated in response to ligand binding on Tyr-1215 and Tyr-1216 in the kinase domain leading to further phosphorylation of Tyr-1330 and Tyr-1337 in the C-terminal multifunctional docking site. Ubiquitinated. Ubiquitination by CBL regulates the receptor stability and activity through proteasomal degradation. In terms of processing, O-mannosylation of IPT/TIG domains on Thr or Ser residues by TMEM260 is required for protein maturation. O-mannosylated residues are composed of single mannose glycans that are not elongated or modified. As to expression, expressed in liver, skin, lung, brain, testis and kidney.

It localises to the membrane. It catalyses the reaction L-tyrosyl-[protein] + ATP = O-phospho-L-tyrosyl-[protein] + ADP + H(+). With respect to regulation, in its inactive state, the C-terminal tail interacts with the catalytic domain and inhibits the kinase activity. Upon ligand binding, the C-terminal tail is displaced and becomes phosphorylated, thus increasing the kinase activity. Functionally, receptor tyrosine kinase that transduces signals from the extracellular matrix into the cytoplasm by binding to MST1 ligand. Regulates many physiological processes including cell survival, migration and differentiation. Ligand binding at the cell surface induces autophosphorylation of RON on its intracellular domain that provides docking sites for downstream signaling molecules. Following activation by ligand, interacts with the PI3-kinase subunit PIK3R1, PLCG1 or the adapter GAB1. Recruitment of these downstream effectors by RON leads to the activation of several signaling cascades including the RAS-ERK, PI3 kinase-AKT, or PLCgamma-PKC. RON signaling activates the wound healing response by promoting epithelial cell migration, proliferation as well as survival at the wound site. Also plays a role in the innate immune response by regulating the migration and phagocytic activity of macrophages. Alternatively, RON can also promote signals such as cell migration and proliferation in response to growth factors other than MST1 ligand. In Mus musculus (Mouse), this protein is Macrophage-stimulating protein receptor (Mst1r).